The chain runs to 900 residues: Nuclear factor NF-kappa-B p100 subunit (900 aa).

A phosphoserine mark is found at S23 and S161. The RHD domain maps to 38 to 343 (PYLVIVEQPK…EVQRKRRKAL (306 aa)). The Nuclear localization signal signature appears at 337–341 (RKRRK). The segment at 346 to 377 (FSQPFGGGSHMGGGSGGAAGGYGGAGGGGSLG) is GRR. The interval 404 to 435 (GAQMAATVPSRDSGEEAAEPSAPSRTPQCEPQ) is disordered. T429 is subject to Phosphothreonine. ANK repeat units follow at residues 487-519 (NGDT…DLGV), 526-555 (LHQT…DPAL), 559-591 (HGDS…AVPQ), 599-628 (EGLY…EVEA), 633-663 (GGRT…NVNA), and 667-696 (AGNT…DIHA). The tract at residues 698–734 (NEEPLCPLPSPPTSDSDSDSEGPEKDTRSSFRGHTPL) is disordered. S713, S715, and S717 each carry phosphoserine. Residues 729–758 (RGHTPLDLTCSTKVKTLLLNAAQNTMEPPL) form an ANK 7 repeat. The Death domain occupies 764 to 851 (AGPGLSLGDT…EGVRLLRGPE (88 aa)). S812 bears the Phosphoserine mark. A compositionally biased stretch (basic and acidic residues) spans 849–866 (GPETRDKLPSTAEVKEDS). The segment at 849–900 (GPETRDKLPSTAEVKEDSAYGSQSVEQEAEKLGPPPEPPGGLCHGHPQPQVH) is disordered. Residue K855 forms a Glycyl lysine isopeptide (Lys-Gly) (interchain with G-Cter in ubiquitin) linkage. Phosphoserine; by MAP3K14 is present on residues S866 and S870. The segment covering 888-900 (GGLCHGHPQPQVH) has biased composition (low complexity).

As to quaternary structure, component of the NF-kappa-B RelB-p52 complex. Homodimer; component of the NF-kappa-B p52-p52 complex. Component of the NF-kappa-B p65-p52 complex. Component of the NF-kappa-B p52-c-Rel complex. NFKB2/p52 interacts with NFKBIE. Component of a complex consisting of the NF-kappa-B p50-p50 homodimer and BCL3. Directly interacts with MEN1. While translation occurs, the particular unfolded structure after the GRR repeat promotes the generation of p52 making it an acceptable substrate for the proteasome. This process is known as cotranslational processing. The processed form is active and the unprocessed form acts as an inhibitor (I kappa B-like), being able to form cytosolic complexes with NF-kappa B, trapping it in the cytoplasm. Complete folding of the region downstream of the GRR repeat precludes processing. Post-translationally, subsequent to MAP3K14-dependent serine phosphorylation, p100 polyubiquitination occurs then triggering its proteasome-dependent processing. In terms of processing, constitutive processing is tightly suppressed by its C-terminal processing inhibitory domain, named PID, which contains the death domain. Ubiquitinated by TRIM55; leading to processing by VCP and subsequent ubiquitin-dependent protein degradation by the proteasome.

Its subcellular location is the nucleus. The protein localises to the cytoplasm. NF-kappa-B is a pleiotropic transcription factor present in almost all cell types and is the endpoint of a series of signal transduction events that are initiated by a vast array of stimuli related to many biological processes such as inflammation, immunity, differentiation, cell growth, tumorigenesis and apoptosis. NF-kappa-B is a homo- or heterodimeric complex formed by the Rel-like domain-containing proteins RELA/p65, RELB, NFKB1/p105, NFKB1/p50, REL and NFKB2/p52. The dimers bind at kappa-B sites in the DNA of their target genes and the individual dimers have distinct preferences for different kappa-B sites that they can bind with distinguishable affinity and specificity. Different dimer combinations act as transcriptional activators or repressors, respectively. NF-kappa-B is controlled by various mechanisms of post-translational modification and subcellular compartmentalization as well as by interactions with other cofactors or corepressors. NF-kappa-B complexes are held in the cytoplasm in an inactive state complexed with members of the NF-kappa-B inhibitor (I-kappa-B) family. In a conventional activation pathway, I-kappa-B is phosphorylated by I-kappa-B kinases (IKKs) in response to different activators, subsequently degraded thus liberating the active NF-kappa-B complex which translocates to the nucleus. In a non-canonical activation pathway, the MAP3K14-activated CHUK/IKKA homodimer phosphorylates NFKB2/p100 associated with RelB, inducing its proteolytic processing to NFKB2/p52 and the formation of NF-kappa-B RelB-p52 complexes. The NF-kappa-B heterodimeric RelB-p52 complex is a transcriptional activator. The NF-kappa-B p52-p52 homodimer is a transcriptional repressor. NFKB2 appears to have dual functions such as cytoplasmic retention of attached NF-kappa-B proteins by p100 and generation of p52 by a cotranslational processing. The proteasome-mediated process ensures the production of both p52 and p100 and preserves their independent function. p52 binds to the kappa-B consensus sequence 5'-GGRNNYYCC-3', located in the enhancer region of genes involved in immune response and acute phase reactions. p52 and p100 are respectively the minor and major form; the processing of p100 being relatively poor. Isoform p49 is a subunit of the NF-kappa-B protein complex, which stimulates the HIV enhancer in synergy with p65. In concert with RELB, regulates the circadian clock by repressing the transcriptional activator activity of the CLOCK-BMAL1 heterodimer. This is Nuclear factor NF-kappa-B p100 subunit (NFKB2) from Homo sapiens (Human).